Consider the following 307-residue polypeptide: Aspartate carbamoyltransferase catalytic subunit (307 aa).

The carbamoyl phosphate site is built by R56 and T57. Residue K84 coordinates L-aspartate. The carbamoyl phosphate site is built by R106, H136, and Q139. L-aspartate contacts are provided by R169 and R221. A262 and P263 together coordinate carbamoyl phosphate.

Belongs to the aspartate/ornithine carbamoyltransferase superfamily. ATCase family. Heterododecamer (2C3:3R2) of six catalytic PyrB chains organized as two trimers (C3), and six regulatory PyrI chains organized as three dimers (R2).

It catalyses the reaction carbamoyl phosphate + L-aspartate = N-carbamoyl-L-aspartate + phosphate + H(+). The protein operates within pyrimidine metabolism; UMP biosynthesis via de novo pathway; (S)-dihydroorotate from bicarbonate: step 2/3. Catalyzes the condensation of carbamoyl phosphate and aspartate to form carbamoyl aspartate and inorganic phosphate, the committed step in the de novo pyrimidine nucleotide biosynthesis pathway. The sequence is that of Aspartate carbamoyltransferase catalytic subunit from Streptococcus pneumoniae (strain 70585).